Consider the following 520-residue polypeptide: Anthranilate synthase component 1 (520 aa).

Residues Ser40 and 291 to 293 contribute to the L-tryptophan site; that span reads PYM. Chorismate is bound at residue 328-329; that stretch reads GT. Glu361 contributes to the Mg(2+) binding site. Chorismate is bound by residues Tyr449, Arg469, 483–485, and Gly485; that span reads GAG. Mg(2+) is bound at residue Glu498.

The protein belongs to the anthranilate synthase component I family. Heterotetramer consisting of two non-identical subunits: a beta subunit (TrpG) and a large alpha subunit (TrpE). Mg(2+) is required as a cofactor.

It catalyses the reaction chorismate + L-glutamine = anthranilate + pyruvate + L-glutamate + H(+). It functions in the pathway amino-acid biosynthesis; L-tryptophan biosynthesis; L-tryptophan from chorismate: step 1/5. With respect to regulation, feedback inhibited by tryptophan. Its function is as follows. Part of a heterotetrameric complex that catalyzes the two-step biosynthesis of anthranilate, an intermediate in the biosynthesis of L-tryptophan. In the first step, the glutamine-binding beta subunit (TrpG) of anthranilate synthase (AS) provides the glutamine amidotransferase activity which generates ammonia as a substrate that, along with chorismate, is used in the second step, catalyzed by the large alpha subunit of AS (TrpE) to produce anthranilate. In the absence of TrpG, TrpE can synthesize anthranilate directly from chorismate and high concentrations of ammonia. This is Anthranilate synthase component 1 (trpE) from Buchnera aphidicola subsp. Pemphigus spyrothecae.